Reading from the N-terminus, the 195-residue chain is Probable chemoreceptor glutamine deamidase CheD 2 (195 aa).

The protein belongs to the CheD family.

It carries out the reaction L-glutaminyl-[protein] + H2O = L-glutamyl-[protein] + NH4(+). Its function is as follows. Probably deamidates glutamine residues to glutamate on methyl-accepting chemotaxis receptors (MCPs), playing an important role in chemotaxis. The protein is Probable chemoreceptor glutamine deamidase CheD 2 of Burkholderia thailandensis (strain ATCC 700388 / DSM 13276 / CCUG 48851 / CIP 106301 / E264).